Here is a 115-residue protein sequence, read N- to C-terminus: Nucleoid-associated protein Npun_F0448 (115 aa).

The protein belongs to the YbaB/EbfC family. In terms of assembly, homodimer.

Its subcellular location is the cytoplasm. The protein resides in the nucleoid. In terms of biological role, binds to DNA and alters its conformation. May be involved in regulation of gene expression, nucleoid organization and DNA protection. This Nostoc punctiforme (strain ATCC 29133 / PCC 73102) protein is Nucleoid-associated protein Npun_F0448.